We begin with the raw amino-acid sequence, 354 residues long: Uroporphyrinogen decarboxylase (354 aa).

Substrate is bound by residues 25 to 29 (RQAGR), D75, Y152, T207, and H330.

Belongs to the uroporphyrinogen decarboxylase family. In terms of assembly, homodimer.

The protein resides in the cytoplasm. The enzyme catalyses uroporphyrinogen III + 4 H(+) = coproporphyrinogen III + 4 CO2. It participates in porphyrin-containing compound metabolism; protoporphyrin-IX biosynthesis; coproporphyrinogen-III from 5-aminolevulinate: step 4/4. In terms of biological role, catalyzes the decarboxylation of four acetate groups of uroporphyrinogen-III to yield coproporphyrinogen-III. The chain is Uroporphyrinogen decarboxylase from Xanthomonas euvesicatoria pv. vesicatoria (strain 85-10) (Xanthomonas campestris pv. vesicatoria).